We begin with the raw amino-acid sequence, 808 residues long: Phospholipase D alpha 1 (808 aa).

A C2 domain is found at 1–125 (MAQILLHGTL…LEGEEIDKWV (125 aa)). Aspartate 186 contributes to the Ca(2+) binding site. Positions 326-364 (TMFTHHQKIVVVDSELPSGESEKRRILSFVGGIDLCDGR) constitute a PLD phosphodiesterase 1 domain. Active-site residues include histidine 331, lysine 333, and aspartate 338. An a 1,2-diacyl-sn-glycero-3-phosphate-binding site is contributed by histidine 331. Ca(2+) is bound by residues histidine 370 and histidine 404. A 1,2-diacyl-sn-glycero-3-phosphate contacts are provided by glutamine 520 and histidine 659. The PLD phosphodiesterase 2 domain occupies 654 to 681 (FMIYVHSKMMIVDDEYIIVGSANINQRS). Catalysis depends on residues histidine 659, lysine 661, and aspartate 666. Glutamate 720 is a Ca(2+) binding site.

The protein belongs to the phospholipase D family. C2-PLD subfamily. The cofactor is Ca(2+).

The enzyme catalyses a 1,2-diacyl-sn-glycero-3-phosphocholine + H2O = a 1,2-diacyl-sn-glycero-3-phosphate + choline + H(+). Its function is as follows. Hydrolyzes glycerol-phospholipids at the terminal phosphodiesteric bond. Plays an important role in various cellular processes. The chain is Phospholipase D alpha 1 (PLD1) from Nicotiana tabacum (Common tobacco).